Here is a 164-residue protein sequence, read N- to C-terminus: Cell division protein SepF (164 aa).

A disordered region spans residues 21–71 (YQQGQQPAQQQQSPVQAVPTPAPAPQQQAKRAPVTPLHKPSTTTRNAAPAE). Over residues 22 to 54 (QQGQQPAQQQQSPVQAVPTPAPAPQQQAKRAPV) the composition is skewed to low complexity.

It belongs to the SepF family. In terms of assembly, homodimer. Interacts with FtsZ.

It is found in the cytoplasm. In terms of biological role, cell division protein that is part of the divisome complex and is recruited early to the Z-ring. Probably stimulates Z-ring formation, perhaps through the cross-linking of FtsZ protofilaments. Its function overlaps with FtsA. The chain is Cell division protein SepF from Clavibacter michiganensis subsp. michiganensis (strain NCPPB 382).